Here is a 451-residue protein sequence, read N- to C-terminus: MATTAQYLPRGPGGGAGGTGPLMHPDAAAAAAAAAAAERLHAGAAYREVQKLMHHEWLGAGAGHPVGLAHPQWLPTGGGGGGDWAGGPHLEHGKAGGGGTGRADDGGGGGGFHARLVHQGAAHAGAAWAQGSTAHHLGPAMSPSPGASGGHQPQPLGLYAQAAYPGGGGGGLAGMLAAGGGGAGPGLHHALHEDGHEAQLEPSPPPHLGAHGHAHGHAHAGGLHAAAAHLHPGAGGGGSSVGEHSDEDAPSSDDLEQFAKQFKQRRIKLGFTQADVGLALGTLYGNVFSQTTICRFEALQLSFKNMCKLKPLLNKWLEETDSSSGSPTNLDKIAAQGRKRKKRTSIEVGVKGALESHFLKCPKPSAHEITGLADSLQLEKEVVRVWFCNRRQKEKRMTPAAGAGHPPMDDVYAPGELGPGGGGASPPSAPPPPPPAALHHHHHHTLPGSVQ.

Disordered stretches follow at residues 1 to 21 (MATT…GTGP), 69 to 114 (AHPQ…GFHA), 127 to 154 (AWAQ…HQPQ), 186 to 253 (GLHH…PSSD), and 395 to 451 (KRMT…GSVQ). Composition is skewed to gly residues over residues 11-20 (GPGGGAGGTG), 76-85 (TGGGGGGDWA), and 95-112 (AGGG…GGGF). Residues 190-199 (ALHEDGHEAQ) show a composition bias toward basic and acidic residues. A compositionally biased stretch (low complexity) spans 220–232 (AGGLHAAAAHLHP). In terms of domain architecture, POU-specific spans 247-321 (EDAPSSDDLE…LLNKWLEETD (75 aa)). The segment at residues 339 to 398 (KRKKRTSIEVGVKGALESHFLKCPKPSAHEITGLADSLQLEKEVVRVWFCNRRQKEKRMT) is a DNA-binding region (homeobox). A compositionally biased stretch (pro residues) spans 427–436 (PSAPPPPPPA).

The protein belongs to the POU transcription factor family. Class-3 subfamily. In terms of tissue distribution, expressed in embryonal stem cells and in the developing brain.

Its subcellular location is the nucleus. Functionally, transcription factor that binds to the octamer motif (5'-ATTTGCAT-3'). Acts as a transcriptional activator when binding cooperatively with SOX4, SOX11, or SOX12 to gene promoters. Acts as a transcriptional repressor of myelin-specific genes. The chain is POU domain, class 3, transcription factor 1 (POU3F1) from Homo sapiens (Human).